The chain runs to 103 residues: N(4)-acetylcytidine amidohydrolase (103 aa).

Positions 6–92 (TFFERFEPGI…VIQEIYPGLE (87 aa)) constitute an ASCH domain. Residue K20 is the Proton acceptor of the active site. T23 acts as the Nucleophile in catalysis. The active-site Proton donor is the E73.

The protein belongs to the N(4)-acetylcytidine amidohydrolase family.

The catalysed reaction is N(4)-acetylcytidine + H2O = cytidine + acetate + H(+). It carries out the reaction N(4)-acetyl-2'-deoxycytidine + H2O = 2'-deoxycytidine + acetate + H(+). The enzyme catalyses N(4)-acetylcytosine + H2O = cytosine + acetate + H(+). In terms of biological role, catalyzes the hydrolysis of N(4)-acetylcytidine (ac4C). The polypeptide is N(4)-acetylcytidine amidohydrolase (Shewanella sp. (strain MR-7)).